Here is a 179-residue protein sequence, read N- to C-terminus: MKRERINPDTLELDERVVLINRVSKVVKGGRRFSFSTVVVVGDGKGHVGIGMGKAAEVPDAIRKGAEAAKRNLIRVPLVHSTIPHEIVTKFAATKVMLRPAAPGTGVIAGRGVRPVVEAAGIKDLLSKVYGSNNPVNVVKATFKALSEMTSLQEMARRRDMTPQELNARRMRRETTEAA.

The S5 DRBM domain maps to 13–76; sequence LDERVVLINR…EAAKRNLIRV (64 aa). Residues 160–179 form a disordered region; sequence DMTPQELNARRMRRETTEAA.

It belongs to the universal ribosomal protein uS5 family. In terms of assembly, part of the 30S ribosomal subunit. Contacts proteins S4 and S8.

With S4 and S12 plays an important role in translational accuracy. Its function is as follows. Located at the back of the 30S subunit body where it stabilizes the conformation of the head with respect to the body. The chain is Small ribosomal subunit protein uS5 from Chloroflexus aggregans (strain MD-66 / DSM 9485).